The following is a 270-amino-acid chain: Bis(5'-nucleosyl)-tetraphosphatase, symmetrical (270 aa).

It belongs to the Ap4A hydrolase family.

It carries out the reaction P(1),P(4)-bis(5'-adenosyl) tetraphosphate + H2O = 2 ADP + 2 H(+). Hydrolyzes diadenosine 5',5'''-P1,P4-tetraphosphate to yield ADP. The protein is Bis(5'-nucleosyl)-tetraphosphatase, symmetrical of Actinobacillus pleuropneumoniae serotype 3 (strain JL03).